A 67-amino-acid polypeptide reads, in one-letter code: Guanine nucleotide-binding protein G(I)/G(S)/G(O) subunit gamma-13 (67 aa).

Residue Cys-64 is modified to Cysteine methyl ester. A lipid anchor (S-farnesyl cysteine) is attached at Cys-64. The propeptide at 65–67 (TIL) is removed in mature form.

This sequence belongs to the G protein gamma family. G proteins are composed of 3 units, alpha, beta and gamma.

It localises to the cell membrane. In terms of biological role, guanine nucleotide-binding proteins (G proteins) are involved as a modulator or transducer in various transmembrane signaling systems. The beta and gamma chains are required for the GTPase activity, for replacement of GDP by GTP, and for G protein-effector interaction. The chain is Guanine nucleotide-binding protein G(I)/G(S)/G(O) subunit gamma-13 (GNG13) from Homo sapiens (Human).